A 184-amino-acid polypeptide reads, in one-letter code: Ribosome-recycling factor (184 aa).

A disordered region spans residues 141-165 (DEKNGDITEDDLRSQTDDVQKATDN).

The protein belongs to the RRF family.

It is found in the cytoplasm. Functionally, responsible for the release of ribosomes from messenger RNA at the termination of protein biosynthesis. May increase the efficiency of translation by recycling ribosomes from one round of translation to another. The polypeptide is Ribosome-recycling factor (Staphylococcus epidermidis (strain ATCC 35984 / DSM 28319 / BCRC 17069 / CCUG 31568 / BM 3577 / RP62A)).